The sequence spans 343 residues: Phosphoribosylformylglycinamidine cyclo-ligase (343 aa).

The protein belongs to the AIR synthase family.

The protein resides in the cytoplasm. It carries out the reaction 2-formamido-N(1)-(5-O-phospho-beta-D-ribosyl)acetamidine + ATP = 5-amino-1-(5-phospho-beta-D-ribosyl)imidazole + ADP + phosphate + H(+). It functions in the pathway purine metabolism; IMP biosynthesis via de novo pathway; 5-amino-1-(5-phospho-D-ribosyl)imidazole from N(2)-formyl-N(1)-(5-phospho-D-ribosyl)glycinamide: step 2/2. In Staphylococcus epidermidis (strain ATCC 35984 / DSM 28319 / BCRC 17069 / CCUG 31568 / BM 3577 / RP62A), this protein is Phosphoribosylformylglycinamidine cyclo-ligase.